The chain runs to 295 residues: Protoheme IX farnesyltransferase (295 aa).

Topologically, residues 1–9 (MSVKHFIQI) are cytoplasmic. A helical transmembrane segment spans residues 10–28 (TKPGIIFGNVLSVAGGFFL). At 29–37 (ASKGHVDFA) the chain is on the periplasmic side. Residues 38-56 (LFLAVVIGTSLVVASGCVF) traverse the membrane as a helical segment. Topologically, residues 57-78 (NNCIDRDIDHKMERTKNRVMVQ) are cytoplasmic. The chain crosses the membrane as a helical span at residues 79-97 (GGMSLPLALIYATLLGVAG). Topologically, residues 98-107 (FSLLYVQANP) are periplasmic. Residues 108–126 (LSAFCALIGFIVYVGFYSL) traverse the membrane as a helical segment. The Cytoplasmic portion of the chain corresponds to 127–197 (WLKRKSVHGT…YSAANIPVLP (71 aa)). Residues 198 to 216 (VARGILAAKKQIVLYVLAF) form a helical membrane-spanning segment. Topologically, residues 217–228 (VLATLMLTLGGY) are periplasmic. Residues 229–247 (AGLGYLAVAAAMGLYWLYM) traverse the membrane as a helical segment. Topologically, residues 248 to 268 (AWGGYKAEDDSKWARKVFGFS) are cytoplasmic. Residues 269–287 (ILTVTALSVMMGVDSQTAA) traverse the membrane as a helical segment. Topologically, residues 288–295 (DVLMTYAR) are periplasmic.

Belongs to the UbiA prenyltransferase family. Mg(2+) serves as cofactor. It depends on Ca(2+) as a cofactor.

It is found in the cell inner membrane. It catalyses the reaction heme b + (2E,6E)-farnesyl diphosphate + H2O = Fe(II)-heme o + diphosphate. Functionally, converts protoheme IX and farnesyl diphosphate to heme O. In Pseudomonas putida (Arthrobacter siderocapsulatus), this protein is Protoheme IX farnesyltransferase (cyoE).